Consider the following 176-residue polypeptide: NAD(P)H-quinone oxidoreductase subunit 6, chloroplastic (176 aa).

The next 5 membrane-spanning stretches (helical) occupy residues 10–30, 32–52, 61–81, 92–112, and 152–172; these read FLLV…VLLT, PIYS…LYIL, AQLL…VMFM, LWTV…GLLI, and FFLP…GAIT.

Belongs to the complex I subunit 6 family. As to quaternary structure, NDH is composed of at least 16 different subunits, 5 of which are encoded in the nucleus.

The protein localises to the plastid. It is found in the chloroplast thylakoid membrane. It catalyses the reaction a plastoquinone + NADH + (n+1) H(+)(in) = a plastoquinol + NAD(+) + n H(+)(out). It carries out the reaction a plastoquinone + NADPH + (n+1) H(+)(in) = a plastoquinol + NADP(+) + n H(+)(out). NDH shuttles electrons from NAD(P)H:plastoquinone, via FMN and iron-sulfur (Fe-S) centers, to quinones in the photosynthetic chain and possibly in a chloroplast respiratory chain. The immediate electron acceptor for the enzyme in this species is believed to be plastoquinone. Couples the redox reaction to proton translocation, and thus conserves the redox energy in a proton gradient. This is NAD(P)H-quinone oxidoreductase subunit 6, chloroplastic (ndhG) from Morus indica (Mulberry).